The sequence spans 213 residues: DNA-directed RNA polymerase subunit alpha (213 aa).

The protein belongs to the RNA polymerase alpha chain family. In plastids the minimal PEP RNA polymerase catalytic core is composed of four subunits: alpha, beta, beta', and beta''. When a (nuclear-encoded) sigma factor is associated with the core the holoenzyme is formed, which can initiate transcription.

The protein resides in the plastid. The protein localises to the chloroplast. The enzyme catalyses RNA(n) + a ribonucleoside 5'-triphosphate = RNA(n+1) + diphosphate. Its function is as follows. DNA-dependent RNA polymerase catalyzes the transcription of DNA into RNA using the four ribonucleoside triphosphates as substrates. This chain is DNA-directed RNA polymerase subunit alpha (rpoA), found in Euglena stellata.